Here is a 117-residue protein sequence, read N- to C-terminus: Immunoglobulin lambda variable 6-57 (117 aa).

An N-terminal signal peptide occupies residues methionine 1–alanine 19. Residues asparagine 20–serine 44 are framework-1. One can recognise an Ig-like domain in the interval asparagine 20 to asparagine 117. Cysteines 41 and 110 form a disulfide. The interval serine 45–tyrosine 52 is complementarity-determining-1. The interval valine 53–tyrosine 69 is framework-2. A disordered region spans residues threonine 65–isoleucine 97. The segment at glutamate 70 to asparagine 72 is complementarity-determining-2. The tract at residues glutamine 73–cysteine 110 is framework-3. The segment covering serine 83–isoleucine 97 has biased composition (low complexity). Residues glutamine 111 to asparagine 117 form a complementarity-determining-3 region.

As to quaternary structure, immunoglobulins are composed of two identical heavy chains and two identical light chains; disulfide-linked.

It is found in the secreted. Its subcellular location is the cell membrane. Its function is as follows. V region of the variable domain of immunoglobulin light chains that participates in the antigen recognition. Immunoglobulins, also known as antibodies, are membrane-bound or secreted glycoproteins produced by B lymphocytes. In the recognition phase of humoral immunity, the membrane-bound immunoglobulins serve as receptors which, upon binding of a specific antigen, trigger the clonal expansion and differentiation of B lymphocytes into immunoglobulins-secreting plasma cells. Secreted immunoglobulins mediate the effector phase of humoral immunity, which results in the elimination of bound antigens. The antigen binding site is formed by the variable domain of one heavy chain, together with that of its associated light chain. Thus, each immunoglobulin has two antigen binding sites with remarkable affinity for a particular antigen. The variable domains are assembled by a process called V-(D)-J rearrangement and can then be subjected to somatic hypermutations which, after exposure to antigen and selection, allow affinity maturation for a particular antigen. The chain is Immunoglobulin lambda variable 6-57 from Homo sapiens (Human).